Reading from the N-terminus, the 391-residue chain is UDP-N-acetylglucosamine--N-acetylmuramyl-(pentapeptide) pyrophosphoryl-undecaprenol N-acetylglucosamine transferase (391 aa).

Residues 11–13 (TGG), Arg176, Ser206, and Gln312 contribute to the UDP-N-acetyl-alpha-D-glucosamine site.

It belongs to the glycosyltransferase 28 family. MurG subfamily.

It localises to the cell inner membrane. It carries out the reaction di-trans,octa-cis-undecaprenyl diphospho-N-acetyl-alpha-D-muramoyl-L-alanyl-D-glutamyl-meso-2,6-diaminopimeloyl-D-alanyl-D-alanine + UDP-N-acetyl-alpha-D-glucosamine = di-trans,octa-cis-undecaprenyl diphospho-[N-acetyl-alpha-D-glucosaminyl-(1-&gt;4)]-N-acetyl-alpha-D-muramoyl-L-alanyl-D-glutamyl-meso-2,6-diaminopimeloyl-D-alanyl-D-alanine + UDP + H(+). Its pathway is cell wall biogenesis; peptidoglycan biosynthesis. In terms of biological role, cell wall formation. Catalyzes the transfer of a GlcNAc subunit on undecaprenyl-pyrophosphoryl-MurNAc-pentapeptide (lipid intermediate I) to form undecaprenyl-pyrophosphoryl-MurNAc-(pentapeptide)GlcNAc (lipid intermediate II). This chain is UDP-N-acetylglucosamine--N-acetylmuramyl-(pentapeptide) pyrophosphoryl-undecaprenol N-acetylglucosamine transferase, found in Treponema denticola (strain ATCC 35405 / DSM 14222 / CIP 103919 / JCM 8153 / KCTC 15104).